The chain runs to 82 residues: Small ribosomal subunit protein uS17 (82 aa).

The protein belongs to the universal ribosomal protein uS17 family. Part of the 30S ribosomal subunit.

Functionally, one of the primary rRNA binding proteins, it binds specifically to the 5'-end of 16S ribosomal RNA. The polypeptide is Small ribosomal subunit protein uS17 (Bradyrhizobium sp. (strain BTAi1 / ATCC BAA-1182)).